Consider the following 125-residue polypeptide: Large ribosomal subunit protein bL12 (125 aa).

This sequence belongs to the bacterial ribosomal protein bL12 family. In terms of assembly, homodimer. Part of the ribosomal stalk of the 50S ribosomal subunit. Forms a multimeric L10(L12)X complex, where L10 forms an elongated spine to which 2 to 4 L12 dimers bind in a sequential fashion. Binds GTP-bound translation factors.

Forms part of the ribosomal stalk which helps the ribosome interact with GTP-bound translation factors. Is thus essential for accurate translation. This is Large ribosomal subunit protein bL12 from Ruthia magnifica subsp. Calyptogena magnifica.